Here is a 550-residue protein sequence, read N- to C-terminus: CTP synthase (550 aa).

An amidoligase domain region spans residues 1-266; that stretch reads MNVNYIFVTG…DEYICKYFNL (266 aa). Ser-14 provides a ligand contact to CTP. Position 14 (Ser-14) interacts with UTP. ATP-binding positions include 15-20 and Asp-72; that span reads SLGKGI. The Mg(2+) site is built by Asp-72 and Glu-140. CTP contacts are provided by residues 147–149, 187–192, and Lys-223; these read DIE and KTKPTQ. UTP contacts are provided by residues 187 to 192 and Lys-223; that span reads KTKPTQ. The region spanning 291–546 is the Glutamine amidotransferase type-1 domain; it reads TIGIVGKYIR…INAAIQYQCK (256 aa). L-glutamine is bound at residue Gly-353. Cys-380 serves as the catalytic Nucleophile; for glutamine hydrolysis. Residues 381-384, Glu-404, and Arg-474 contribute to the L-glutamine site; that span reads LGMQ. Residues His-519 and Glu-521 contribute to the active site.

The protein belongs to the CTP synthase family. Homotetramer.

The catalysed reaction is UTP + L-glutamine + ATP + H2O = CTP + L-glutamate + ADP + phosphate + 2 H(+). It catalyses the reaction L-glutamine + H2O = L-glutamate + NH4(+). It carries out the reaction UTP + NH4(+) + ATP = CTP + ADP + phosphate + 2 H(+). It participates in pyrimidine metabolism; CTP biosynthesis via de novo pathway; CTP from UDP: step 2/2. With respect to regulation, allosterically activated by GTP, when glutamine is the substrate; GTP has no effect on the reaction when ammonia is the substrate. The allosteric effector GTP functions by stabilizing the protein conformation that binds the tetrahedral intermediate(s) formed during glutamine hydrolysis. Inhibited by the product CTP, via allosteric rather than competitive inhibition. Its function is as follows. Catalyzes the ATP-dependent amination of UTP to CTP with either L-glutamine or ammonia as the source of nitrogen. Regulates intracellular CTP levels through interactions with the four ribonucleotide triphosphates. In Blochmanniella floridana, this protein is CTP synthase.